Reading from the N-terminus, the 159-residue chain is S-ribosylhomocysteine lyase (159 aa).

Fe cation is bound by residues H53, H57, and C124.

It belongs to the LuxS family. As to quaternary structure, homodimer. Fe cation serves as cofactor.

The enzyme catalyses S-(5-deoxy-D-ribos-5-yl)-L-homocysteine = (S)-4,5-dihydroxypentane-2,3-dione + L-homocysteine. Functionally, involved in the synthesis of autoinducer 2 (AI-2) which is secreted by bacteria and is used to communicate both the cell density and the metabolic potential of the environment. The regulation of gene expression in response to changes in cell density is called quorum sensing. Catalyzes the transformation of S-ribosylhomocysteine (RHC) to homocysteine (HC) and 4,5-dihydroxy-2,3-pentadione (DPD). This Desulfotalea psychrophila (strain LSv54 / DSM 12343) protein is S-ribosylhomocysteine lyase.